Consider the following 295-residue polypeptide: N-acetylmuramic acid 6-phosphate etherase (295 aa).

Residues 54–217 (VIASFRQGGR…STASMIGIGK (164 aa)) enclose the SIS domain. Residue E82 is the Proton donor of the active site. E113 is an active-site residue.

This sequence belongs to the GCKR-like family. MurNAc-6-P etherase subfamily. Homodimer.

The enzyme catalyses N-acetyl-D-muramate 6-phosphate + H2O = N-acetyl-D-glucosamine 6-phosphate + (R)-lactate. It functions in the pathway amino-sugar metabolism; N-acetylmuramate degradation. Its function is as follows. Specifically catalyzes the cleavage of the D-lactyl ether substituent of MurNAc 6-phosphate, producing GlcNAc 6-phosphate and D-lactate. The protein is N-acetylmuramic acid 6-phosphate etherase of Geobacillus sp. (strain WCH70).